The sequence spans 158 residues: 6,7-dimethyl-8-ribityllumazine synthase (158 aa).

Residues Phe23, 61-63, and 85-87 each bind 5-amino-6-(D-ribitylamino)uracil; these read SFE and AVI. Residue 90–91 coordinates (2S)-2-hydroxy-3-oxobutyl phosphate; that stretch reads DT. His93 (proton donor) is an active-site residue. Phe118 lines the 5-amino-6-(D-ribitylamino)uracil pocket. Residue Arg132 coordinates (2S)-2-hydroxy-3-oxobutyl phosphate.

This sequence belongs to the DMRL synthase family.

It carries out the reaction (2S)-2-hydroxy-3-oxobutyl phosphate + 5-amino-6-(D-ribitylamino)uracil = 6,7-dimethyl-8-(1-D-ribityl)lumazine + phosphate + 2 H2O + H(+). It functions in the pathway cofactor biosynthesis; riboflavin biosynthesis; riboflavin from 2-hydroxy-3-oxobutyl phosphate and 5-amino-6-(D-ribitylamino)uracil: step 1/2. Functionally, catalyzes the formation of 6,7-dimethyl-8-ribityllumazine by condensation of 5-amino-6-(D-ribitylamino)uracil with 3,4-dihydroxy-2-butanone 4-phosphate. This is the penultimate step in the biosynthesis of riboflavin. The protein is 6,7-dimethyl-8-ribityllumazine synthase of Prochlorococcus marinus (strain NATL1A).